We begin with the raw amino-acid sequence, 890 residues long: Protein translocase subunit SecA (890 aa).

ATP is bound by residues Gln86, 104-108 (GEGKT), and Asp493. The segment covering 851 to 872 (EASHGDGDAKKAPVVKKEESGR) has biased composition (basic and acidic residues). The disordered stretch occupies residues 851–873 (EASHGDGDAKKAPVVKKEESGRN). Zn(2+) contacts are provided by Cys876, Cys878, Cys887, and Cys888.

It belongs to the SecA family. In terms of assembly, monomer and homodimer. Part of the essential Sec protein translocation apparatus which comprises SecA, SecYEG and auxiliary proteins SecDF. Other proteins may also be involved. Zn(2+) is required as a cofactor.

The protein resides in the cell membrane. It localises to the cytoplasm. The enzyme catalyses ATP + H2O + cellular proteinSide 1 = ADP + phosphate + cellular proteinSide 2.. Its function is as follows. Part of the Sec protein translocase complex. Interacts with the SecYEG preprotein conducting channel. Has a central role in coupling the hydrolysis of ATP to the transfer of proteins into and across the cell membrane, serving as an ATP-driven molecular motor driving the stepwise translocation of polypeptide chains across the membrane. This is Protein translocase subunit SecA from Alkaliphilus oremlandii (strain OhILAs) (Clostridium oremlandii (strain OhILAs)).